We begin with the raw amino-acid sequence, 331 residues long: Ketol-acid reductoisomerase (NADP(+)) (331 aa).

The region spanning 2 to 182 (AQLFYDSDAD…GGTRAGILET (181 aa)) is the KARI N-terminal Rossmann domain. NADP(+) is bound by residues 25-28 (YGSQ), Ser51, Ser53, and 83-86 (DEFQ). Residue His108 is part of the active site. Residue Gly134 participates in NADP(+) binding. A KARI C-terminal knotted domain is found at 183 to 328 (NFKEETETDL…KGLRAMFSWL (146 aa)). 4 residues coordinate Mg(2+): Asp191, Glu195, Glu227, and Glu231. Ser252 provides a ligand contact to substrate.

This sequence belongs to the ketol-acid reductoisomerase family. Mg(2+) serves as cofactor.

It carries out the reaction (2R)-2,3-dihydroxy-3-methylbutanoate + NADP(+) = (2S)-2-acetolactate + NADPH + H(+). The catalysed reaction is (2R,3R)-2,3-dihydroxy-3-methylpentanoate + NADP(+) = (S)-2-ethyl-2-hydroxy-3-oxobutanoate + NADPH + H(+). It functions in the pathway amino-acid biosynthesis; L-isoleucine biosynthesis; L-isoleucine from 2-oxobutanoate: step 2/4. It participates in amino-acid biosynthesis; L-valine biosynthesis; L-valine from pyruvate: step 2/4. Functionally, involved in the biosynthesis of branched-chain amino acids (BCAA). Catalyzes an alkyl-migration followed by a ketol-acid reduction of (S)-2-acetolactate (S2AL) to yield (R)-2,3-dihydroxy-isovalerate. In the isomerase reaction, S2AL is rearranged via a Mg-dependent methyl migration to produce 3-hydroxy-3-methyl-2-ketobutyrate (HMKB). In the reductase reaction, this 2-ketoacid undergoes a metal-dependent reduction by NADPH to yield (R)-2,3-dihydroxy-isovalerate. In Prochlorococcus marinus (strain MIT 9313), this protein is Ketol-acid reductoisomerase (NADP(+)).